The chain runs to 121 residues: Small ribosomal subunit protein uS13 (121 aa).

Positions 94–121 (GLPLRGQRTRTNARTRKGPRRAAQSLKK) are disordered.

Belongs to the universal ribosomal protein uS13 family. Part of the 30S ribosomal subunit. Forms a loose heterodimer with protein S19. Forms two bridges to the 50S subunit in the 70S ribosome.

Functionally, located at the top of the head of the 30S subunit, it contacts several helices of the 16S rRNA. In the 70S ribosome it contacts the 23S rRNA (bridge B1a) and protein L5 of the 50S subunit (bridge B1b), connecting the 2 subunits; these bridges are implicated in subunit movement. Contacts the tRNAs in the A and P-sites. This chain is Small ribosomal subunit protein uS13, found in Paraburkholderia phymatum (strain DSM 17167 / CIP 108236 / LMG 21445 / STM815) (Burkholderia phymatum).